We begin with the raw amino-acid sequence, 623 residues long: Actin-related protein 8 (623 aa).

The segment covering 1-24 (MTQTDRDAENGRDREKDREKEQQR) has biased composition (basic and acidic residues). Positions 1–29 (MTQTDRDAENGRDREKDREKEQQRGVKRP) are disordered. 283–286 (DVGD) serves as a coordination point for ATP. Positions 428 to 438 (TQSKQDQSSKA) are enriched in low complexity. The interval 428–458 (TQSKQDQSSKASADRKSFPKPSSFEGESSVC) is disordered.

It belongs to the actin family. ARP8 subfamily. In terms of assembly, component of the chromatin remodeling INO80 complex; specifically part of a complex module associated with the DBINO domain of INO80. Exists as monomers and dimers, but the dimer is most probably the biologically relevant form required for stable interactions with histones that exploits the twofold symmetry of the nucleosome core.

It is found in the nucleus. Its subcellular location is the chromosome. Plays an important role in the functional organization of mitotic chromosomes. Exhibits low basal ATPase activity, and unable to polymerize. In terms of biological role, proposed core component of the chromatin remodeling INO80 complex which is involved in transcriptional regulation, DNA replication and probably DNA repair. Required for the recruitment of INO80 (and probably the INO80 complex) to sites of DNA damage Strongly prefer nucleosomes and H3-H4 tetramers over H2A-H2B dimers, suggesting it may act as a nucleosome recognition module within the complex. The chain is Actin-related protein 8 (actr8) from Danio rerio (Zebrafish).